Reading from the N-terminus, the 301-residue chain is Probable alpha-L-glutamate ligase 2 (301 aa).

Residues 104–287 enclose the ATP-grasp domain; that stretch reads LQLLSRKSIG…VADKIIQFIE (184 aa). ATP is bound by residues Lys-141, 178 to 179, Asp-187, and 211 to 213; these read EY and RSN. The Mg(2+) site is built by Asp-248, Glu-260, and Asn-262. Mn(2+) is bound by residues Asp-248, Glu-260, and Asn-262.

The protein belongs to the RimK family. Requires Mg(2+) as cofactor. Mn(2+) is required as a cofactor.

This chain is Probable alpha-L-glutamate ligase 2, found in Shewanella denitrificans (strain OS217 / ATCC BAA-1090 / DSM 15013).